The sequence spans 464 residues: Glutamate--tRNA ligase (464 aa).

The 'HIGH' region motif lies at 9-19 (PSPTGYLHIGG). A 'KMSKS' region motif is present at residues 242 to 246 (KISKR). Position 245 (Lys-245) interacts with ATP.

It belongs to the class-I aminoacyl-tRNA synthetase family. Glutamate--tRNA ligase type 1 subfamily. In terms of assembly, monomer.

It is found in the cytoplasm. The enzyme catalyses tRNA(Glu) + L-glutamate + ATP = L-glutamyl-tRNA(Glu) + AMP + diphosphate. In terms of biological role, catalyzes the attachment of glutamate to tRNA(Glu) in a two-step reaction: glutamate is first activated by ATP to form Glu-AMP and then transferred to the acceptor end of tRNA(Glu). In Neisseria gonorrhoeae (strain NCCP11945), this protein is Glutamate--tRNA ligase.